The primary structure comprises 528 residues: 4-chlorobenzoate--CoA ligase (528 aa).

Residues 161–169, 300–305, and Asn-409 contribute to the ATP site; these read TSGTTGLPK and NIYGTT.

This sequence belongs to the ATP-dependent AMP-binding enzyme family. Homodimer. The cofactor is Mg(2+).

The enzyme catalyses 4-chlorobenzoate + ATP + CoA = 4-chlorobenzoyl-CoA + AMP + diphosphate. Its pathway is xenobiotic degradation; 4-chlorobenzoate degradation; 4-hydroxybenzoate from 4-chlorobenzoate: step 2/3. Its activity is regulated as follows. Unaffected by 5,5'-dithiobis-(2-nitrobenzoic acid), 4-chloromercuribenzoate and sodium azide. Inhibited by Cu(2+), Fe(2+) and Zn(2+). Unaffected by Na(+), K(+) and Li(+). Its function is as follows. Catalyzes the formation of chlorobenzoyl-CoA via a 2 step reaction. First 4-chlorobenzoyl is adenylated by ATP, followed by acyl transfer from the 4-chlorobenzoyl-AMP intermediate to CoA. Benzoate, 4-bromobenzoate, 4-iodobenzoate and 4-methylbenzoate also act as substrates. Inactive towards 4-aminobenzoate, 4-hydroxybenzoate, 2-aminobenzoate, 2,3-dihydroxybenzoate, 4-coumarate and the aliphatic carboxylic acids palmate, caproate, laurate and butyrate. Negligible activity is detected when ATP is replaced by UTP, CTP or GTP as cosubstrate. This chain is 4-chlorobenzoate--CoA ligase, found in Pseudomonas sp. (strain CBS-3).